Consider the following 213-residue polypeptide: Orotate phosphoribosyltransferase (213 aa).

5-phospho-alpha-D-ribose 1-diphosphate is bound at residue Lys26. Orotate is bound at residue 34-35 (FF). Residues 72–73 (YK), Arg99, Lys100, Lys103, His105, and 124–132 (DDVITAGTA) each bind 5-phospho-alpha-D-ribose 1-diphosphate. Positions 128 and 156 each coordinate orotate.

Belongs to the purine/pyrimidine phosphoribosyltransferase family. PyrE subfamily. As to quaternary structure, homodimer. Requires Mg(2+) as cofactor.

The enzyme catalyses orotidine 5'-phosphate + diphosphate = orotate + 5-phospho-alpha-D-ribose 1-diphosphate. It functions in the pathway pyrimidine metabolism; UMP biosynthesis via de novo pathway; UMP from orotate: step 1/2. Its function is as follows. Catalyzes the transfer of a ribosyl phosphate group from 5-phosphoribose 1-diphosphate to orotate, leading to the formation of orotidine monophosphate (OMP). In Pseudomonas putida (strain W619), this protein is Orotate phosphoribosyltransferase.